The following is a 119-amino-acid chain: MTRPETPQAPDFDFEKSRTALLGYRIMAWTTGIWLIALCYEIVSHLVFHHEIRWIEVVHGWVYFVYVLTAFNLAIKVRWPIGKTVGVLLAGTVPLLGIIVEHFQTKDVKTRFGLRHSRT.

Transmembrane regions (helical) follow at residues 28-48 (AWTTGIWLIALCYEIVSHLVF), 55-75 (IEVVHGWVYFVYVLTAFNLAI), and 80-100 (PIGKTVGVLLAGTVPLLGIIV).

The protein to M.tuberculosis Rv1342c.

It localises to the cell membrane. This is an uncharacterized protein from Mycobacterium leprae (strain TN).